A 198-amino-acid polypeptide reads, in one-letter code: Segregation and condensation protein B (198 aa).

Residues 167–198 (PKLADPEADDPDQNEMDLFFDRFNQSKEQEEE) form a disordered region. Residues 172–181 (PEADDPDQNE) show a composition bias toward acidic residues.

This sequence belongs to the ScpB family. In terms of assembly, homodimer. Homodimerization may be required to stabilize the binding of ScpA to the Smc head domains. Component of a cohesin-like complex composed of ScpA, ScpB and the Smc homodimer, in which ScpA and ScpB bind to the head domain of Smc. The presence of the three proteins is required for the association of the complex with DNA.

Its subcellular location is the cytoplasm. In terms of biological role, participates in chromosomal partition during cell division. May act via the formation of a condensin-like complex containing Smc and ScpA that pull DNA away from mid-cell into both cell halves. This Listeria welshimeri serovar 6b (strain ATCC 35897 / DSM 20650 / CCUG 15529 / CIP 8149 / NCTC 11857 / SLCC 5334 / V8) protein is Segregation and condensation protein B.